The primary structure comprises 289 residues: Rhodopsin (289 aa).

Topologically, residues 1–7 are extracellular; it reads YLVNPAG. Residues 8–32 traverse the membrane as a helical segment; the sequence is YAALGAYMFLLILIGSPVNFLTLYV. Residues 33 to 44 lie on the Cytoplasmic side of the membrane; the sequence is TLEHKKLRTPLN. A helical transmembrane segment spans residues 45–67; the sequence is YILLNLAVADLFMVLGGFTTTMY. Topologically, residues 68 to 81 are extracellular; the sequence is TSMHGYSVLGRLGC. The cysteines at positions 81 and 158 are disulfide-linked. A helical transmembrane segment spans residues 82–104; it reads ILEGFFATLGGEIALWSLVVLAI. Residues 105-107 carry the 'Ionic lock' involved in activated form stabilization motif; the sequence is ERW. Over 105–123 the chain is Cytoplasmic; sequence ERWIVVCKPISNFRFTEDH. Residues 124–144 traverse the membrane as a helical segment; that stretch reads AIMGLAFSWVMALACAVPPLV. Over 145-173 the chain is Extracellular; sequence GWSRYIPEGMQCSCGVDYYTRAEGFNNES. A glycan (N-linked (GlcNAc...) asparagine) is linked at asparagine 171. Residues 174 to 195 traverse the membrane as a helical segment; the sequence is FVIYMFIVHFLIPLSVIFFCYG. Residues 196-223 lie on the Cytoplasmic side of the membrane; sequence RLLCAVKEAAAAQQESETTQRPEKEVTR. A helical membrane pass occupies residues 224 to 245; it reads MVVIMVIAFLVCCLPNASVAWW. Topologically, residues 246–257 are extracellular; that stretch reads IFCNQGSDFGPI. The chain crosses the membrane as a helical span at residues 258–279; the sequence is FMTLPSFFAKSAAIYNPMIYIC. The residue at position 267 (lysine 267) is an N6-(retinylidene)lysine. The Cytoplasmic segment spans residues 280-289; the sequence is MNKQFRHCMI.

The protein belongs to the G-protein coupled receptor 1 family. Opsin subfamily. Phosphorylated on some or all of the serine and threonine residues present in the C-terminal region. Post-translationally, contains one covalently linked retinal chromophore.

It localises to the membrane. It is found in the cell projection. Its subcellular location is the cilium. The protein localises to the photoreceptor outer segment. Functionally, photoreceptor required for image-forming vision at low light intensity. While most salt water fish species use retinal as chromophore, most freshwater fish use 3-dehydroretinal, or a mixture of retinal and 3-dehydroretinal. Light-induced isomerization of 11-cis to all-trans retinal triggers a conformational change that activates signaling via G-proteins. Subsequent receptor phosphorylation mediates displacement of the bound G-protein alpha subunit by arrestin and terminates signaling. This chain is Rhodopsin (rho), found in Limnocottus bergianus.